Reading from the N-terminus, the 1059-residue chain is Pleckstrin homology domain-containing family M member 1 (1059 aa).

The region spanning 40–182 (TSEDGDANTM…LSFELSYKSA (143 aa)) is the RUN domain. Residue serine 218 is modified to Phosphoserine. Disordered regions lie at residues 218–244 (SLDS…RRDR), 272–334 (LQEN…TPMF), and 354–411 (SEEP…DQGS). Composition is skewed to polar residues over residues 313–334 (SKAQ…TPMF) and 392–401 (GSTSDQQPSS). A phosphoserine mark is found at serine 430, serine 433, and serine 488. Residues 536-627 (GLMKLGTVAR…WLDRVREALQ (92 aa)) form the PH 1 domain. The short motif at 634 to 640 (EEEWVNI) is the LIR element. An interaction with RAB7A region spans residues 657–1059 (LPPYSALLPE…RKYQEQNTVS (403 aa)). The 95-residue stretch at 686-780 (DAIKESLLYL…WRDLVRKVLA (95 aa)) folds into the PH 2 domain. Residues 989 to 1043 (QHVYHCDLCTQRGFICQICHHQDIIFPFEFDTTVRCAECRTVFHQSCQAVVRKGC) form a Phorbol-ester/DAG-type zinc finger.

In terms of assembly, interacts (via N- and C-terminus) with RAB7A (GTP-bound form). Simultaneously interacts with RAB7A and ARL8B; bringing about clustering and fusion of late endosomes and lysosomes. Interacts (via RUN domain) with ARL8B (GTP-bound form); the interaction is required for PLEKHM1 localization to lysosomes and for ARL8B function in delivery and degradation of endocytic and autophagic cargo in lysosomes. PLEKHM1 and PLEKHM2 compete for interaction with ARL8B. Interacts with ARL8A; the interaction is weaker than with ARL8B. Interacts with VPS41, VPS11, VPS18, VPS33A and VPS39; indicative for an association with the HOPS complex; the interactions with, at least, VPS41, VPS11, VPS18 and VPS33A require ARL8B. Interacts with GABARAP, GABARAPL, GABARAPL2, MAP1LC3A, MAP1LC3B and MAP1LC3C. Interacts with PAFAH1B. Interacts (via N- and C-terminus) with NDEL1. Interacts (via C-terminus) with MAP3K7. Interacts (via N- and C-terminus) with FAM98A. Interacts (via C-terminus) with DEF8; this interaction is weak but increased in a RAB7A-dependent manner. May interact with sialyl-lex-positive protein. In terms of tissue distribution, expressed in testis, skeletal muscle, lung, liver, spleen, brain, heart, kidney and bone. Weakly expressed in monocytes (at protein level).

It localises to the autolysosome membrane. Its subcellular location is the endosome membrane. It is found in the late endosome membrane. The protein resides in the lysosome membrane. Its function is as follows. Acts as a multivalent adapter protein that regulates Rab7-dependent and HOPS complex-dependent fusion events in the endolysosomal system and couples autophagic and the endocytic trafficking pathways. Acts as a dual effector of RAB7A and ARL8B that simultaneously binds these GTPases, bringing about clustering and fusion of late endosomes and lysosomes. Required for late stages of endolysosomal maturation, facilitating both endocytosis-mediated degradation of growth factor receptors and autophagosome clearance. Interaction with Arl8b is a crucial factor in the terminal maturation of autophagosomes and to mediate autophagosome-lysosome fusion. Positively regulates lysosome peripheral distribution and ruffled border formation in osteoclasts. May be involved in negative regulation of endocytic transport from early endosome to late endosome/lysosome implicating its association with Rab7. May have a role in sialyl-lex-mediated transduction of apoptotic signals. Involved in bone resorption. This chain is Pleckstrin homology domain-containing family M member 1, found in Rattus norvegicus (Rat).